Here is a 174-residue protein sequence, read N- to C-terminus: Co-chaperone protein HscB homolog (174 aa).

One can recognise a J domain in the interval 2-74 (NYFELFKFSP…IRRAEHLLSL (73 aa)).

This sequence belongs to the HscB family. As to quaternary structure, interacts with HscA and stimulates its ATPase activity.

Functionally, co-chaperone involved in the maturation of iron-sulfur cluster-containing proteins. Seems to help targeting proteins to be folded toward HscA. The polypeptide is Co-chaperone protein HscB homolog (Shewanella sp. (strain W3-18-1)).